Reading from the N-terminus, the 171-residue chain is Cytochrome c oxidase subunit 4 isoform 2, mitochondrial (171 aa).

The N-terminal 28 residues, 1–28, are a transit peptide targeting the mitochondrion; the sequence is MLPRAAWSLVLRKGGGGRRGMHSSEGTT. Residues 13–32 are disordered; that stretch reads KGGGGRRGMHSSEGTTRGGG. The Mitochondrial matrix segment spans residues 29-100; sequence RGGGKMSPYT…TFAEMNRRSN (72 aa). Residues 101-126 form a helical membrane-spanning segment; that stretch reads EWKTVMGCVFFFIGFAALVIWWQRVY. The Mitochondrial intermembrane segment spans residues 127–171; the sequence is VFPPKPITLTDERKAQQLQRMLDMKVNPVQGLASRWDYEKKQWKK.

The protein belongs to the cytochrome c oxidase IV family. In terms of assembly, component of the cytochrome c oxidase (complex IV, CIV), a multisubunit enzyme composed of 14 subunits. The complex is composed of a catalytic core of 3 subunits MT-CO1, MT-CO2 and MT-CO3, encoded in the mitochondrial DNA, and 11 supernumerary subunits COX4I1 (or COX4I2), COX5A, COX5B, COX6A1 (or COX6A2), COX6B1 (or COX6B2), COX6C, COX7A2 (or COX7A1), COX7B, COX7C, COX8A and NDUFA4, which are encoded in the nuclear genome. The complex exists as a monomer or a dimer and forms supercomplexes (SCs) in the inner mitochondrial membrane with NADH-ubiquinone oxidoreductase (complex I, CI) and ubiquinol-cytochrome c oxidoreductase (cytochrome b-c1 complex, complex III, CIII), resulting in different assemblies (supercomplex SCI(1)III(2)IV(1) and megacomplex MCI(2)III(2)IV(2)). Highly expressed in lung.

The protein localises to the mitochondrion inner membrane. It functions in the pathway energy metabolism; oxidative phosphorylation. In terms of biological role, component of the cytochrome c oxidase, the last enzyme in the mitochondrial electron transport chain which drives oxidative phosphorylation. The respiratory chain contains 3 multisubunit complexes succinate dehydrogenase (complex II, CII), ubiquinol-cytochrome c oxidoreductase (cytochrome b-c1 complex, complex III, CIII) and cytochrome c oxidase (complex IV, CIV), that cooperate to transfer electrons derived from NADH and succinate to molecular oxygen, creating an electrochemical gradient over the inner membrane that drives transmembrane transport and the ATP synthase. Cytochrome c oxidase is the component of the respiratory chain that catalyzes the reduction of oxygen to water. Electrons originating from reduced cytochrome c in the intermembrane space (IMS) are transferred via the dinuclear copper A center (CU(A)) of subunit 2 and heme A of subunit 1 to the active site in subunit 1, a binuclear center (BNC) formed by heme A3 and copper B (CU(B)). The BNC reduces molecular oxygen to 2 water molecules using 4 electrons from cytochrome c in the IMS and 4 protons from the mitochondrial matrix. The protein is Cytochrome c oxidase subunit 4 isoform 2, mitochondrial of Homo sapiens (Human).